The chain runs to 140 residues: Ribonuclease P protein component (140 aa).

Residues 33–54 (RALKPSSAKKSSLDTAAKTQPA) form a disordered region.

Belongs to the RnpA family. In terms of assembly, consists of a catalytic RNA component (M1 or rnpB) and a protein subunit.

It catalyses the reaction Endonucleolytic cleavage of RNA, removing 5'-extranucleotides from tRNA precursor.. Functionally, RNaseP catalyzes the removal of the 5'-leader sequence from pre-tRNA to produce the mature 5'-terminus. It can also cleave other RNA substrates such as 4.5S RNA. The protein component plays an auxiliary but essential role in vivo by binding to the 5'-leader sequence and broadening the substrate specificity of the ribozyme. This chain is Ribonuclease P protein component, found in Trichormus variabilis (strain ATCC 29413 / PCC 7937) (Anabaena variabilis).